Consider the following 246-residue polypeptide: Probable transcriptional regulatory protein CLD_1467 (246 aa).

This sequence belongs to the TACO1 family.

The protein localises to the cytoplasm. This Clostridium botulinum (strain Okra / Type B1) protein is Probable transcriptional regulatory protein CLD_1467.